Here is a 413-residue protein sequence, read N- to C-terminus: Gamma-glutamyl phosphate reductase (413 aa).

This sequence belongs to the gamma-glutamyl phosphate reductase family.

It localises to the cytoplasm. The enzyme catalyses L-glutamate 5-semialdehyde + phosphate + NADP(+) = L-glutamyl 5-phosphate + NADPH + H(+). The protein operates within amino-acid biosynthesis; L-proline biosynthesis; L-glutamate 5-semialdehyde from L-glutamate: step 2/2. Functionally, catalyzes the NADPH-dependent reduction of L-glutamate 5-phosphate into L-glutamate 5-semialdehyde and phosphate. The product spontaneously undergoes cyclization to form 1-pyrroline-5-carboxylate. This Geobacillus sp. (strain WCH70) protein is Gamma-glutamyl phosphate reductase.